Consider the following 218-residue polypeptide: MRIILLGAPGAGKGTQAQYISEAFGIPQISTGDMLRAAVKAATPLGLAAKKIMDEGGLVPDDLIISLVKERIAQPDCANGCLFDGFPRTLAQAEALRAGGIRIDHIIEMNVPDEEIIKRMSGRRVHLASGRTYHVTFNPPAVPDKDDLTGEPLVQRNDDCEETVRKRLKAYHELTEPLVGYYRNLSMNGSADAPKYSRIAGIGTVEQIKDEIIATLNG.

ATP is bound at residue glycine 10 to threonine 15. Residues serine 30–valine 59 are NMP. AMP-binding positions include threonine 31, arginine 36, glycine 57–valine 59, glycine 85–arginine 88, and glutamine 92. Residues glycine 122–aspartate 159 are LID. ATP contacts are provided by residues arginine 123 and threonine 132–tyrosine 133. AMP contacts are provided by arginine 156 and arginine 167. Glycine 203 is an ATP binding site.

The protein belongs to the adenylate kinase family. Monomer.

The protein resides in the cytoplasm. The catalysed reaction is AMP + ATP = 2 ADP. The protein operates within purine metabolism; AMP biosynthesis via salvage pathway; AMP from ADP: step 1/1. Functionally, catalyzes the reversible transfer of the terminal phosphate group between ATP and AMP. Plays an important role in cellular energy homeostasis and in adenine nucleotide metabolism. In Chlorobaculum tepidum (strain ATCC 49652 / DSM 12025 / NBRC 103806 / TLS) (Chlorobium tepidum), this protein is Adenylate kinase.